A 429-amino-acid polypeptide reads, in one-letter code: Glutamate-1-semialdehyde 2,1-aminomutase 2 (429 aa).

Position 268 is an N6-(pyridoxal phosphate)lysine (lysine 268).

The protein belongs to the class-III pyridoxal-phosphate-dependent aminotransferase family. HemL subfamily. In terms of assembly, homodimer. It depends on pyridoxal 5'-phosphate as a cofactor.

It is found in the cytoplasm. The enzyme catalyses (S)-4-amino-5-oxopentanoate = 5-aminolevulinate. Its pathway is porphyrin-containing compound metabolism; protoporphyrin-IX biosynthesis; 5-aminolevulinate from L-glutamyl-tRNA(Glu): step 2/2. This Bacillus cereus (strain AH820) protein is Glutamate-1-semialdehyde 2,1-aminomutase 2.